Here is a 248-residue protein sequence, read N- to C-terminus: Triosephosphate isomerase (248 aa).

Substrate-binding residues include asparagine 11 and lysine 13. Histidine 95 (electrophile) is an active-site residue. The Proton acceptor role is filled by glutamate 165.

This sequence belongs to the triosephosphate isomerase family. In terms of assembly, homodimer.

The protein localises to the cytoplasm. The enzyme catalyses dihydroxyacetone phosphate = methylglyoxal + phosphate. It carries out the reaction D-glyceraldehyde 3-phosphate = dihydroxyacetone phosphate. It participates in carbohydrate degradation; glycolysis; D-glyceraldehyde 3-phosphate from glycerone phosphate: step 1/1. The protein operates within carbohydrate biosynthesis; gluconeogenesis. Its function is as follows. Triosephosphate isomerase is an extremely efficient metabolic enzyme that catalyzes the interconversion between dihydroxyacetone phosphate (DHAP) and D-glyceraldehyde-3-phosphate (G3P) in glycolysis and gluconeogenesis. Functionally, it is also responsible for the non-negligible production of methylglyoxal a reactive cytotoxic side-product that modifies and can alter proteins, DNA and lipids. The polypeptide is Triosephosphate isomerase (tpi1) (Xenopus laevis (African clawed frog)).